A 212-amino-acid chain; its full sequence is Probable GTP-binding protein EngB (212 aa).

An EngB-type G domain is found at 38 to 210 (SLPEIAFVGK…KASLAKCIKP (173 aa)). GTP-binding positions include 46–53 (GKSNVGKS), 73–77 (GRTRQ), 91–94 (DLPG), 158–161 (TKSD), and 189–191 (VSN). 2 residues coordinate Mg(2+): serine 53 and threonine 75.

Belongs to the TRAFAC class TrmE-Era-EngA-EngB-Septin-like GTPase superfamily. EngB GTPase family. It depends on Mg(2+) as a cofactor.

Its function is as follows. Necessary for normal cell division and for the maintenance of normal septation. In Rickettsia conorii (strain ATCC VR-613 / Malish 7), this protein is Probable GTP-binding protein EngB.